We begin with the raw amino-acid sequence, 959 residues long: Isoleucine--tRNA ligase (959 aa).

A 'HIGH' region motif is present at residues 60–70 (PYANGSLHIGH). Glutamate 571 lines the L-isoleucyl-5'-AMP pocket. Positions 612–616 (KMSKS) match the 'KMSKS' region motif. Lysine 615 contributes to the ATP binding site. 4 residues coordinate Zn(2+): cysteine 928, cysteine 931, cysteine 948, and cysteine 951.

It belongs to the class-I aminoacyl-tRNA synthetase family. IleS type 1 subfamily. As to quaternary structure, monomer. Zn(2+) is required as a cofactor.

Its subcellular location is the cytoplasm. The enzyme catalyses tRNA(Ile) + L-isoleucine + ATP = L-isoleucyl-tRNA(Ile) + AMP + diphosphate. Catalyzes the attachment of isoleucine to tRNA(Ile). As IleRS can inadvertently accommodate and process structurally similar amino acids such as valine, to avoid such errors it has two additional distinct tRNA(Ile)-dependent editing activities. One activity is designated as 'pretransfer' editing and involves the hydrolysis of activated Val-AMP. The other activity is designated 'posttransfer' editing and involves deacylation of mischarged Val-tRNA(Ile). The sequence is that of Isoleucine--tRNA ligase from Nostoc punctiforme (strain ATCC 29133 / PCC 73102).